A 554-amino-acid polypeptide reads, in one-letter code: DNA ligase B (554 aa).

Lys-122 functions as the N6-AMP-lysine intermediate in the catalytic mechanism.

The protein belongs to the NAD-dependent DNA ligase family. LigB subfamily.

It catalyses the reaction NAD(+) + (deoxyribonucleotide)n-3'-hydroxyl + 5'-phospho-(deoxyribonucleotide)m = (deoxyribonucleotide)n+m + AMP + beta-nicotinamide D-nucleotide.. Functionally, catalyzes the formation of phosphodiester linkages between 5'-phosphoryl and 3'-hydroxyl groups in double-stranded DNA using NAD as a coenzyme and as the energy source for the reaction. This is DNA ligase B from Pseudomonas fluorescens (strain SBW25).